A 401-amino-acid chain; its full sequence is Imidazolonepropionase (401 aa).

Residues His66 and His68 each contribute to the Fe(3+) site. Positions 66 and 68 each coordinate Zn(2+). 4-imidazolone-5-propanoate contacts are provided by Arg75, Tyr138, and His171. Position 138 (Tyr138) interacts with N-formimidoyl-L-glutamate. A Fe(3+)-binding site is contributed by His236. His236 serves as a coordination point for Zn(2+). Gln239 lines the 4-imidazolone-5-propanoate pocket. Asp311 is a Fe(3+) binding site. Asp311 contributes to the Zn(2+) binding site. N-formimidoyl-L-glutamate contacts are provided by Asn313 and Gly315. Position 316 (Thr316) interacts with 4-imidazolone-5-propanoate.

The protein belongs to the metallo-dependent hydrolases superfamily. HutI family. Zn(2+) is required as a cofactor. Fe(3+) serves as cofactor.

The protein localises to the cytoplasm. The enzyme catalyses 4-imidazolone-5-propanoate + H2O = N-formimidoyl-L-glutamate. It participates in amino-acid degradation; L-histidine degradation into L-glutamate; N-formimidoyl-L-glutamate from L-histidine: step 3/3. In terms of biological role, catalyzes the hydrolytic cleavage of the carbon-nitrogen bond in imidazolone-5-propanoate to yield N-formimidoyl-L-glutamate. It is the third step in the universal histidine degradation pathway. The protein is Imidazolonepropionase of Pseudomonas putida (strain ATCC 47054 / DSM 6125 / CFBP 8728 / NCIMB 11950 / KT2440).